The sequence spans 285 residues: MFLLTPVLVAVVCILVIWVFKNADRSLEEKKEEARAQPWVDEDLKDNTEHLQVEEDTEEWQESEESVEHILFSHTRYPEQEMRMRSQEFYELLSKRRSIRFISSEPVPMEVIDNVIKAAGTAPSGAHTEPWTFVVVKDPDMKHKIREIIEEEEEINYMKRMGKRWVTDLKKLRTNWIKEYLDTAPVLILIFKQVHGFAVNGKKKVHYYNEISVSIACGILLAALQNAGLVTVTTTPLNCGPRLRVLLGRPSHEKLLVLLPVGYPSRGATVPDLKRKTLDQIMVTV.

Residues Met1–Lys21 traverse the membrane as a helical segment. Residues Arg96–Arg100 and Ser124–Gly125 contribute to the FMN site. 3,5-diiodo-L-tyrosine is bound by residues Ala126, Glu153, Tyr157, and Lys178. 4 residues coordinate 3-iodo-L-tyrosine: Ala126, Glu153, Tyr157, and Lys178. FMN is bound by residues Thr233–Thr235 and Arg275.

It belongs to the nitroreductase family. In terms of assembly, homodimer. FMN serves as cofactor.

The protein resides in the cell membrane. It is found in the cytoplasmic vesicle membrane. The enzyme catalyses 2 iodide + L-tyrosine + 2 NADP(+) = 3,5-diiodo-L-tyrosine + 2 NADPH + H(+). It catalyses the reaction iodide + L-tyrosine + NADP(+) = 3-iodo-L-tyrosine + NADPH. The catalysed reaction is 3-iodo-L-tyrosine + iodide + NADP(+) = 3,5-diiodo-L-tyrosine + NADPH + H(+). It carries out the reaction L-tyrosine + chloride + NADP(+) = 3-chloro-L-tyrosine + NADPH. The enzyme catalyses bromide + L-tyrosine + NADP(+) = 3-bromo-L-tyrosine + NADPH. Catalyzes the dehalogenation of halotyrosines such as 3-bromo-L-tyrosine, 3-chloro-L-tyrosine, 3-iodo-L-tyrosine and 3,5-diiodo-L-tyrosine. During thyroid hormone biosynthesis, facilitates iodide salvage by catalysing the oxidative NADPH-dependent deiodination of the halogenated by-products of thyroid hormone production, monoiodotyrosine (L-MIT) and diiodotyrosine (L-DIT). The scavanged iodide can then reenter the hormone-producing pathways. Acts more efficiently on 3-iodo-L-tyrosine than 3,5-diiodo-L-tyrosine. This chain is Iodotyrosine deiodinase 1 (Iyd), found in Rattus norvegicus (Rat).